The following is a 337-amino-acid chain: Probable allantoicase 1 (337 aa).

It belongs to the allantoicase family.

The enzyme catalyses allantoate + H2O = (S)-ureidoglycolate + urea. The protein operates within nitrogen metabolism; (S)-allantoin degradation; (S)-ureidoglycolate from allantoate (aminidohydrolase route): step 1/1. The sequence is that of Probable allantoicase 1 from Burkholderia mallei (strain ATCC 23344).